The chain runs to 269 residues: 3-ketodihydrosphingosine reductase (269 aa).

Gly-10, Ser-12, Ser-13, Gly-14, Lys-36, and Asp-50 together coordinate NADPH. The short motif at 10–14 (GASSG) is the GXSXG element. The active-site Nucleophile; for lipase activity is the Ser-12. Residue Ser-128 is the Proton donor of the active site. The active-site Proton acceptor is the Tyr-142. Tyr-142 and Lys-146 together coordinate NADP(+). NADPH is bound by residues 142–146 (YSASK) and 175–177 (FNT). Residue Lys-146 is part of the active site. The active-site Lowers pKa of active site Tyr is Lys-146.

The protein belongs to the short-chain dehydrogenases/reductases (SDR) family.

The catalysed reaction is sphinganine + NADP(+) = 3-oxosphinganine + NADPH + H(+). The protein operates within lipid metabolism; sphingolipid metabolism. Catalyzes the reduction of 3'-oxosphinganine (3-ketodihydrosphingosine/KDS) to sphinganine (dihydrosphingosine/DHS), the second step of de novo sphingolipid biosynthesis. The sequence is that of 3-ketodihydrosphingosine reductase from Bacteroides thetaiotaomicron (strain ATCC 29148 / DSM 2079 / JCM 5827 / CCUG 10774 / NCTC 10582 / VPI-5482 / E50).